We begin with the raw amino-acid sequence, 218 residues long: 3-dehydroquinate dehydratase (218 aa).

3-dehydroquinate is bound by residues 29–31 (EFR) and Arg56. His116 acts as the Proton donor/acceptor in catalysis. The active-site Schiff-base intermediate with substrate is the Lys142. Positions 180, 200, and 204 each coordinate 3-dehydroquinate.

Belongs to the type-I 3-dehydroquinase family. In terms of assembly, homodimer.

It catalyses the reaction 3-dehydroquinate = 3-dehydroshikimate + H2O. The protein operates within metabolic intermediate biosynthesis; chorismate biosynthesis; chorismate from D-erythrose 4-phosphate and phosphoenolpyruvate: step 3/7. Functionally, involved in the third step of the chorismate pathway, which leads to the biosynthesis of aromatic amino acids. Catalyzes the cis-dehydration of 3-dehydroquinate (DHQ) and introduces the first double bond of the aromatic ring to yield 3-dehydroshikimate. This Methanococcus vannielii (strain ATCC 35089 / DSM 1224 / JCM 13029 / OCM 148 / SB) protein is 3-dehydroquinate dehydratase.